A 199-amino-acid polypeptide reads, in one-letter code: Ribonuclease P protein subunit p25 (199 aa).

Over residues 1 to 11 (MENFRKVRSEE) the composition is skewed to basic and acidic residues. 2 disordered regions span residues 1–28 (MENF…SGPF) and 144–199 (LDPR…DQTA). The span at 151 to 166 (YQPPNPHPGPSSPPAA) shows a compositional bias: pro residues. Residues serine 172 and serine 182 each carry the phosphoserine modification.

The protein belongs to the histone-like Alba family. In terms of assembly, component of nuclear RNase P and RNase MRP ribonucleoproteins. RNase P consists of a catalytic RNA moiety and 10 different protein chains; POP1, POP4, POP5, POP7, RPP14, RPP21, RPP25, RPP30, RPP38 and RPP40. Within the RNase P complex, POP1, POP7 and RPP25 form the 'finger' subcomplex, POP5, RPP14, RPP40 and homodimeric RPP30 form the 'palm' subcomplex, and RPP21, POP4 and RPP38 form the 'wrist' subcomplex. All subunits of the RNase P complex interact with the catalytic RNA. Several subunits of RNase P are also part of the RNase MRP complex. RNase MRP consists of a catalytic RNA moiety and about 8 protein subunits; POP1, POP7, RPP25, RPP30, RPP38, RPP40 and possibly also POP4 and POP5. POP7 forms a heterodimer with RPP25 that binds to the P3 stem loop of the catalytic RNA.

Its subcellular location is the nucleus. The protein localises to the nucleolus. Its function is as follows. Component of ribonuclease P, a ribonucleoprotein complex that generates mature tRNA molecules by cleaving their 5'-ends. Also a component of the MRP ribonuclease complex, which cleaves pre-rRNA sequences. The polypeptide is Ribonuclease P protein subunit p25 (RPP25) (Homo sapiens (Human)).